We begin with the raw amino-acid sequence, 160 residues long: Cytochrome c-type biogenesis protein CcmE (160 aa).

Residues 1–7 (MTRKQRR) are Cytoplasmic-facing. The chain crosses the membrane as a helical; Signal-anchor for type II membrane protein span at residues 8 to 28 (LFMIFGALGTLGVAVGLILFA). Residues 29–160 (LSDNIVFFYG…TQGAAAPLIR (132 aa)) lie on the Periplasmic side of the membrane. Heme is bound by residues H122 and Y126. The segment at 140-160 (VWQEDGQAKPATQGAAAPLIR) is disordered.

The protein belongs to the CcmE/CycJ family.

The protein resides in the cell inner membrane. In terms of biological role, heme chaperone required for the biogenesis of c-type cytochromes. Transiently binds heme delivered by CcmC and transfers the heme to apo-cytochromes in a process facilitated by CcmF and CcmH. The chain is Cytochrome c-type biogenesis protein CcmE from Beijerinckia indica subsp. indica (strain ATCC 9039 / DSM 1715 / NCIMB 8712).